A 74-amino-acid polypeptide reads, in one-letter code: SPbeta prophage-derived uncharacterized HTH-type transcriptional regulator YopS (74 aa).

The HTH cro/C1-type domain occupies 11-66 (IPELCRKKDITINELSEITGIKKQQLSDYNRLVKVDMSIRTAKRIAAALDCNVEDL). The H-T-H motif DNA-binding region spans 22–41 (INELSEITGIKKQQLSDYNR).

This chain is SPbeta prophage-derived uncharacterized HTH-type transcriptional regulator YopS (yopS), found in Bacillus subtilis (strain 168).